A 286-amino-acid chain; its full sequence is MSIISTKYLLQDAQANGYAVPAFNIHNAETIQAILEVCSEMRSPVILAGTPGTFKHIALEEIYALCSAYSMTYNMPLALHLDHHESRDDIRRKVHAGVRSAMIDGSHFPFAENVKLVKSVVDFCHSQDCSVEAELGRLGGVEDDMSVDAESAFLTDPQEAKRFVELTGVDSLAVAIGTAHGLYSKTPKIDFQRLAEIREVVDVPLVLHGASDVPDEFVRRTIELGVTKVNVATELKIAFAGAVKAWFAENPQGNDPRYYMRVGMDAMKEVVRNKINVCGSANRISA.

D82 (proton donor) is an active-site residue. Residues H83 and H180 each contribute to the Zn(2+) site. G181 is a dihydroxyacetone phosphate binding site. Residue H208 coordinates Zn(2+). Dihydroxyacetone phosphate contacts are provided by residues 209–211 and 230–233; these read GAS and NVAT.

It belongs to the class II fructose-bisphosphate aldolase family. TagBP aldolase KbaY subfamily. As to quaternary structure, homotetramer. Forms a complex with KbaZ. It depends on Zn(2+) as a cofactor.

It catalyses the reaction D-tagatofuranose 1,6-bisphosphate = D-glyceraldehyde 3-phosphate + dihydroxyacetone phosphate. Its pathway is carbohydrate metabolism; D-tagatose 6-phosphate degradation; D-glyceraldehyde 3-phosphate and glycerone phosphate from D-tagatose 6-phosphate: step 2/2. Its function is as follows. Catalytic subunit of the tagatose-1,6-bisphosphate aldolase KbaYZ, which catalyzes the reversible aldol condensation of dihydroxyacetone phosphate (DHAP or glycerone-phosphate) with glyceraldehyde 3-phosphate (G3P) to produce tagatose 1,6-bisphosphate (TBP). Requires KbaZ subunit for full activity and stability. The protein is D-tagatose-1,6-bisphosphate aldolase subunit KbaY of Escherichia coli O127:H6 (strain E2348/69 / EPEC).